A 199-amino-acid polypeptide reads, in one-letter code: Recombination protein RecR (199 aa).

A C4-type zinc finger spans residues 57–72; sequence CQACRTFTEETLCPIC. The Toprim domain maps to 81–176; the sequence is EVICVVETPA…SVSRIAHGVP (96 aa).

This sequence belongs to the RecR family.

Its function is as follows. May play a role in DNA repair. It seems to be involved in an RecBC-independent recombinational process of DNA repair. It may act with RecF and RecO. This chain is Recombination protein RecR, found in Shewanella woodyi (strain ATCC 51908 / MS32).